A 208-amino-acid polypeptide reads, in one-letter code: Large ribosomal subunit protein uL3 (208 aa).

Positions S134–P159 are disordered. A compositionally biased stretch (polar residues) spans G144–M158.

Belongs to the universal ribosomal protein uL3 family. Part of the 50S ribosomal subunit. Forms a cluster with proteins L14 and L19.

One of the primary rRNA binding proteins, it binds directly near the 3'-end of the 23S rRNA, where it nucleates assembly of the 50S subunit. The sequence is that of Large ribosomal subunit protein uL3 from Treponema denticola (strain ATCC 35405 / DSM 14222 / CIP 103919 / JCM 8153 / KCTC 15104).